The chain runs to 512 residues: ATP synthase subunit alpha (512 aa).

169-176 lines the ATP pocket; sequence GDRQTGKT.

This sequence belongs to the ATPase alpha/beta chains family. F-type ATPases have 2 components, CF(1) - the catalytic core - and CF(0) - the membrane proton channel. CF(1) has five subunits: alpha(3), beta(3), gamma(1), delta(1), epsilon(1). CF(0) has three main subunits: a(1), b(2) and c(9-12). The alpha and beta chains form an alternating ring which encloses part of the gamma chain. CF(1) is attached to CF(0) by a central stalk formed by the gamma and epsilon chains, while a peripheral stalk is formed by the delta and b chains.

It is found in the cell inner membrane. It carries out the reaction ATP + H2O + 4 H(+)(in) = ADP + phosphate + 5 H(+)(out). Functionally, produces ATP from ADP in the presence of a proton gradient across the membrane. The alpha chain is a regulatory subunit. The polypeptide is ATP synthase subunit alpha (Rickettsia canadensis (strain McKiel)).